The chain runs to 70 residues: DNA-directed RNA polymerase subunit epsilon (70 aa).

Belongs to the RNA polymerase subunit epsilon family. In terms of assembly, RNAP is composed of a core of 2 alpha, a beta and a beta' subunit. The core is associated with a delta subunit, and at least one of epsilon or omega. When a sigma factor is associated with the core the holoenzyme is formed, which can initiate transcription.

The enzyme catalyses RNA(n) + a ribonucleoside 5'-triphosphate = RNA(n+1) + diphosphate. A non-essential component of RNA polymerase (RNAP). The chain is DNA-directed RNA polymerase subunit epsilon from Latilactobacillus sakei subsp. sakei (strain 23K) (Lactobacillus sakei subsp. sakei).